Consider the following 231-residue polypeptide: uncharacterized protein (231 aa).

The signal sequence occupies residues methionine 1–alanine 19. Cysteine 20 carries the N-palmitoyl cysteine lipid modification. A lipid anchor (S-diacylglycerol cysteine) is attached at cysteine 20.

This sequence belongs to the MG439/MG440 family.

Its subcellular location is the cell membrane. This is an uncharacterized protein from Mycoplasma pneumoniae (strain ATCC 29342 / M129 / Subtype 1) (Mycoplasmoides pneumoniae).